The following is a 156-amino-acid chain: MAAGRLRILCLLLLSLHPSLGWVLDLQEASVADKLSFGKMAETRGTWTPHQGNNHVRLPRALAGSCRLWSLTLPVAELGLGYASEEKVIFRYCAGSCPQEARTQHSLVLARLRGRGRAHGRPCCQPTSYADVTFLDDQHHWQQLPQLSAAACGCGG.

The signal sequence occupies residues 1 to 21; the sequence is MAAGRLRILCLLLLSLHPSLG. Cystine bridges form between cysteine 66/cysteine 124, cysteine 93/cysteine 152, and cysteine 97/cysteine 154.

Belongs to the TGF-beta family. GDNF subfamily. Homodimer; disulfide-linked. Interacts with GFRA4 coreceptor and RET: forms a 2:2:2 ternary complex composed of PSPN ligand, GFRA4 and RET receptor.

The protein resides in the secreted. Functionally, growth factor that exhibits neurotrophic activity on mesencephalic dopaminergic and motor neurons. Acts by binding to its coreceptor, GFRA4, leading to autophosphorylation and activation of the RET receptor. This Mus musculus (Mouse) protein is Persephin.